A 111-amino-acid polypeptide reads, in one-letter code: C-type lectin lectoxin-Enh1 (111 aa).

The signal sequence occupies residues 1–23 (MGQFTVVSLGLLAMFLSLSGAKG). A disulfide bridge links cysteine 26 with cysteine 37. Positions 33–108 (RNGVCNKLFP…CASLHPFICQ (76 aa)) constitute a C-type lectin domain. The Mannose-binding motif lies at 72 to 74 (EPN). The Ca(2+) site is built by glutamate 80, asparagine 95, and aspartate 96. A disulfide bridge connects residues cysteine 82 and cysteine 99.

The protein belongs to the true venom lectin family. Expressed by the venom gland.

The protein resides in the secreted. Its function is as follows. Mannose-binding lectin which recognizes specific carbohydrate structures and agglutinates a variety of animal cells by binding to cell-surface glycoproteins and glycolipids. May be a calcium-dependent lectin. This is C-type lectin lectoxin-Enh1 from Pseudoferania polylepis (Macleay's water snake).